The sequence spans 504 residues: 2-isopropylmalate synthase (504 aa).

Positions 6 to 267 (IIVFDTTLRD…YTDINFKEIY (262 aa)) constitute a Pyruvate carboxyltransferase domain. The Mn(2+) site is built by aspartate 15, histidine 201, histidine 203, and asparagine 237. Residues 391 to 504 (EIIALSSSEC…ALNSYISMKQ (114 aa)) are regulatory domain.

This sequence belongs to the alpha-IPM synthase/homocitrate synthase family. LeuA type 1 subfamily. Homodimer. Mn(2+) serves as cofactor.

The protein resides in the cytoplasm. It catalyses the reaction 3-methyl-2-oxobutanoate + acetyl-CoA + H2O = (2S)-2-isopropylmalate + CoA + H(+). It participates in amino-acid biosynthesis; L-leucine biosynthesis; L-leucine from 3-methyl-2-oxobutanoate: step 1/4. Functionally, catalyzes the condensation of the acetyl group of acetyl-CoA with 3-methyl-2-oxobutanoate (2-ketoisovalerate) to form 3-carboxy-3-hydroxy-4-methylpentanoate (2-isopropylmalate). The chain is 2-isopropylmalate synthase from Campylobacter hominis (strain ATCC BAA-381 / DSM 21671 / CCUG 45161 / LMG 19568 / NCTC 13146 / CH001A).